A 447-amino-acid polypeptide reads, in one-letter code: Tubulin beta-1 chain (447 aa).

GTP contacts are provided by glutamine 11, glutamate 69, serine 138, glycine 142, threonine 143, glycine 144, asparagine 204, and asparagine 226. Mg(2+) is bound at residue glutamate 69. Positions 428-447 (ATADEDAEFDEEQEQEIEDN) are disordered. Positions 429 to 447 (TADEDAEFDEEQEQEIEDN) are enriched in acidic residues.

It belongs to the tubulin family. In terms of assembly, dimer of alpha and beta chains. A typical microtubule is a hollow water-filled tube with an outer diameter of 25 nm and an inner diameter of 15 nM. Alpha-beta heterodimers associate head-to-tail to form protofilaments running lengthwise along the microtubule wall with the beta-tubulin subunit facing the microtubule plus end conferring a structural polarity. Microtubules usually have 13 protofilaments but different protofilament numbers can be found in some organisms and specialized cells. Requires Mg(2+) as cofactor.

It is found in the cytoplasm. The protein localises to the cytoskeleton. Tubulin is the major constituent of microtubules, a cylinder consisting of laterally associated linear protofilaments composed of alpha- and beta-tubulin heterodimers. Microtubules grow by the addition of GTP-tubulin dimers to the microtubule end, where a stabilizing cap forms. Below the cap, tubulin dimers are in GDP-bound state, owing to GTPase activity of alpha-tubulin. This Manduca sexta (Tobacco hawkmoth) protein is Tubulin beta-1 chain.